Reading from the N-terminus, the 357-residue chain is Olfactory receptor 2B2 (357 aa).

Residues Met1–Ile25 lie on the Extracellular side of the membrane. Residue Asn5 is glycosylated (N-linked (GlcNAc...) asparagine). Residues Pro26–Ser49 traverse the membrane as a helical segment. Residues His50–Thr57 lie on the Cytoplasmic side of the membrane. A helical membrane pass occupies residues Pro58–Pro79. Topologically, residues Gln80 to Gln100 are extracellular. Cys97 and Cys189 are oxidised to a cystine. The chain crosses the membrane as a helical span at residues Leu101–Phe120. The Cytoplasmic segment spans residues Asp121–Arg139. A helical membrane pass occupies residues Leu140–Leu158. The Extracellular portion of the chain corresponds to Gln159 to Asn195. The helical transmembrane segment at Glu196–Ala219 threads the bilayer. Topologically, residues Phe220–Lys236 are cytoplasmic. Residues Ala237–Tyr259 traverse the membrane as a helical segment. The Extracellular segment spans residues Leu260–Lys272. Residues Met273 to Leu292 form a helical membrane-spanning segment. The Cytoplasmic portion of the chain corresponds to Arg293 to Pro357.

The protein belongs to the G-protein coupled receptor 1 family.

The protein localises to the cell membrane. In terms of biological role, odorant receptor. In Homo sapiens (Human), this protein is Olfactory receptor 2B2 (OR2B2).